A 236-amino-acid chain; its full sequence is Large ribosomal subunit protein eL6 (236 aa).

This sequence belongs to the eukaryotic ribosomal protein eL6 family.

The protein is Large ribosomal subunit protein eL6 (rpl6) of Dictyostelium discoideum (Social amoeba).